A 533-amino-acid polypeptide reads, in one-letter code: MATQQAKILCCGDVNGNFVELIKKISTTEKKNGPFDSLFCVGEFFGDDDDSNEKVINGNIEFPIPTYILGPANPRYSYLYPEESIEFSSNLTYLGKKGLLNTASGLQIAYLSGVEGSSKDLSCFDKADVEELLIPLGTQVGFSGTDILLTSVWPADIARHSHNQPSKPQPGSVLLSKLAAHLKPRYHFAGLGVHYERQPYRNHRVLLEPARHTTRFIGLAAIGNPEKQKWLYACNVKPMRKMEKEELTAQPPNASEFPYRELLEEIAAKETLSRMNGNGQRPEGSQYRFEMGGAEDGAGNGRKRHNDGGNDGPRNKQPVGPCWFCLSNVDAEKHLVVAIGNKCYAAMPKGPLTEDHVMVLSVGHIQSQVSAPVEVRDEIEKFKSAFTLMANKQGKALVTFERNFRTQHLQVQMVMIDKSSSKALKSSFTTAAACAGFELVTMGPDESLLDMVNEGCPYFVAELPDGSKLFTRSMKGFPLHFGREVLASTPILDCEDKVDWKACVLAKEKEVELVNKLKSDFKPFDFTAEDDSD.

Positions 290-314 (EMGGAEDGAGNGRKRHNDGGNDGPR) are disordered.

This sequence belongs to the CWF19 family.

In Caenorhabditis elegans, this protein is CWF19-like protein 1 homolog.